A 247-amino-acid polypeptide reads, in one-letter code: MSDDLKQVVNQLQDRITQLEKKAGIVPNVPKSIRMVLIGPPGAGKGTQAPNLKEKFCACHLATGDMLRAQVTAKTELGVQAKKIMDQGGLVSDEIMVNMIKSELENNKECSQGFILDGFPRTIPQAEKLDSMLEDRKTPLQKAVELKIEDQLLVDRITGRLVHPASGRSYHKLFNPPKKEMTDDQTGEPLVQRSDDNEEALKKRLGTYHKQTEPIVEYYKKSGIWSGIDASQKPSKVWTDILKCLGQ.

42–47 is a binding site for ATP; sequence GAGKGT. The tract at residues 62–91 is NMP; sequence ATGDMLRAQVTAKTELGVQAKKIMDQGGLV. AMP contacts are provided by residues T63, R68, 89–91, 118–121, and Q125; these read GLV and GFPR. The tract at residues 159-196 is LID; that stretch reads GRLVHPASGRSYHKLFNPPKKEMTDDQTGEPLVQRSDD. ATP contacts are provided by residues R160 and 169–170; that span reads SY. The interval 169 to 191 is disordered; it reads SYHKLFNPPKKEMTDDQTGEPLV. Residues R193 and R204 each coordinate AMP. Q232 lines the ATP pocket.

This sequence belongs to the adenylate kinase family. AK2 subfamily. In terms of assembly, monomer.

It is found in the cytoplasm. The protein localises to the cytosol. It localises to the mitochondrion intermembrane space. The enzyme catalyses AMP + ATP = 2 ADP. In terms of biological role, catalyzes the reversible transfer of the terminal phosphate group between ATP and AMP. Plays an important role in cellular energy homeostasis and in adenine nucleotide metabolism. Adenylate kinase activity is critical for regulation of the phosphate utilization and the AMP de novo biosynthesis pathways. This Meyerozyma guilliermondii (strain ATCC 6260 / CBS 566 / DSM 6381 / JCM 1539 / NBRC 10279 / NRRL Y-324) (Yeast) protein is Adenylate kinase.